We begin with the raw amino-acid sequence, 62 residues long: Small ribosomal subunit protein bS21 (62 aa).

Residues 43-52 (VKKKLKSEAA) show a composition bias toward basic and acidic residues. The segment at 43 to 62 (VKKKLKSEAARKRKAKKKRF) is disordered. A compositionally biased stretch (basic residues) spans 53–62 (RKRKAKKKRF).

This sequence belongs to the bacterial ribosomal protein bS21 family.

The polypeptide is Small ribosomal subunit protein bS21 (Levilactobacillus brevis (strain ATCC 367 / BCRC 12310 / CIP 105137 / JCM 1170 / LMG 11437 / NCIMB 947 / NCTC 947) (Lactobacillus brevis)).